Consider the following 630-residue polypeptide: MSVETYKFDAEVGKVLHLVIHTLYTNKKIFLRELISNASDACDKLRYLSQSNAELLQGESDFKITVSMDKEKRYIILQDNGIGMNKEDLTQNLGTIASSGTQKFLEQLGNDAKKDNMLIGQFGVGFYSSYMVADEVKVISKKAGEAQAYQWSSKGEGEYYIEDCEADFIRGTKITLHIKPEYDNYLDHFQIKDIIKTYSDHISVPIYYVGVDGKEQQVNSSSALWTRSKSDITDEQYEEFYRNIAYAIDKPWVTIHNKSEGVIEFTNLLFIPSSKTFDLFHPDRKSRVKLYIKKVFITDENVALIPKYMRFLRGVVDSEDLSLNISRETLQHSPLIDKIQASITKRVITELEKQKTKDQGEYETFWNNFGAVLKEGLCEGTADVDKLLKICLFRSALQDKFISLDEYIANLKSEQKNIYYITGDDLEALKSSPQIEGLLSRNIDVLLLTDDVDKFWVMVTRKYNDYVLKSVTSANIEIDNCDTKTAKSSDTNNDGKDDTSSSDDQNCEQLIKYFKEVLGDKVKSVEVSKKLTRSPVCLTVPEGSMDIRTERFLIEQKQLSSHSSKILEINPNHTIIKKINENIKLNQNLDVNKQLVMTLLDQSYLIEGQPIPDLQDYCNRINFFIEKSVN.

Positions 1–327 are a; substrate-binding; the sequence is MSVETYKFDA…SEDLSLNISR (327 aa). The interval 328-551 is b; that stretch reads ETLQHSPLID…EGSMDIRTER (224 aa). The span at 483 to 499 shows a compositional bias: basic and acidic residues; it reads TKTAKSSDTNNDGKDDT. The segment at 483 to 504 is disordered; it reads TKTAKSSDTNNDGKDDTSSSDD. The tract at residues 552–630 is c; it reads FLIEQKQLSS…INFFIEKSVN (79 aa).

Belongs to the heat shock protein 90 family. As to quaternary structure, homodimer.

It localises to the cytoplasm. Its function is as follows. Molecular chaperone. Has ATPase activity. This is Chaperone protein HtpG from Orientia tsutsugamushi (strain Boryong) (Rickettsia tsutsugamushi).